Consider the following 1379-residue polypeptide: Partitioning defective protein 3 (1379 aa).

Residues 1–23 show a composition bias toward low complexity; that stretch reads MSASSTSSSSTSCPEGGEPSGSC. Disordered regions lie at residues 1 to 32 and 208 to 335; these read MSASSTSSSSTSCPEGGEPSGSCKSSDEGEST and YNVG…SDRK. 2 stretches are compositionally biased toward polar residues: residues 239–256 and 272–284; these read SFDQIPQSGLRVSTPKPS and ILRSSLRTEASGS. Basic and acidic residues-rich tracts occupy residues 302–315 and 322–335; these read EVEKKLAEQDERKS and DKNPGRFARGSDRK. 2 PDZ domains span residues 381–483 and 515–599; these read LVTF…IINR and VVEL…SRVS. Residues 606 to 626 adopt a coiled-coil conformation; it reads TSASSENKENEETLKVVEEEK. Positions 659–750 constitute a PDZ 3 domain; sequence VIPFINGSSS…EVGMISSNVR (92 aa). Disordered regions lie at residues 767–873, 887–918, 949–1085, 1273–1301, and 1350–1379; these read DLSR…MGAA, HQRQNSAPTSSTQKRSKSQPRSSSQRNYRSPM, QSME…GGNV, VEPVSGSSASATDRRGRSTSSGAVASGSS, and AYETRGGGAGGSPSQYRRRDQGPPHRFPQY. 2 stretches are compositionally biased toward low complexity: residues 776-786 and 798-826; these read SSPSPSSRMSS and ATRGTSSSGADSSHSRQSSASSAVPAVPA. 2 stretches are compositionally biased toward basic and acidic residues: residues 828 to 844 and 854 to 869; these read LTERDSIVSDGTSRNDE and FNREGLGRKSLSEKRG. Over residues 894–912 the composition is skewed to low complexity; it reads PTSSTQKRSKSQPRSSSQR. A compositionally biased stretch (polar residues) spans 967 to 977; that stretch reads QIPTGSSSKVQ. Composition is skewed to basic and acidic residues over residues 1030 to 1040 and 1048 to 1060; these read KSRDASPEKTP and SVERPKSIIDERN. Over residues 1290–1301 the composition is skewed to low complexity; sequence STSSGAVASGSS.

This sequence belongs to the PAR3 family. As to quaternary structure, required, together with pkc-3, for the localization of par-6; par-6 is involved in localizing/maintaining par-3 at the cell periphery. Interacts with par-6 and pkc-3 for localization at the periphery of anterior cortex of the embryo. Asymmetrically distributed at the periphery of the zygote and in dividing blastomeres of the germline lineage. Coexpressed with par-6; patchy expression observed at the periphery after completion of meiosis I and in meiosis II. On completion of metaphase II, expression is restricted to the anterior 85% of embryo length; this decreases to 55% in embryos between prophase and telophase of the first mitosis. During the first cleavage, expression is detected in the advancing furrow. Transiently coexpressed and colocalized asymmetrically with par-6 and pkc-3, in the developing somatic gonad, including the spermathecal precursor cells of L4 larvae.

The protein localises to the cytoplasm. Its function is as follows. In cooperation with pkc-3, required for establishing cell polarity and regulating spindle orientation in the early embryo. Localization is crucial for recruiting par-6 and pkc-3 to the peripheral apical cortex and restricting par-2 to basolateral surfaces. Necessary for apicobasal and anterior-posterior asymmetries associated with cell adhesion and gastrulation during the first few cycles of embryogenesis, and also for epithelial cell polarity in the distal spermatheca. Regulates the asymmetric localization of csnk-1, ppk-1 and gpr-1/2 during the first embryonic division. In Caenorhabditis elegans, this protein is Partitioning defective protein 3.